We begin with the raw amino-acid sequence, 219 residues long: Small ribosomal subunit protein uS3 (219 aa).

The 69-residue stretch at 38–106 (IREYIENRLK…RVHINIFEVK (69 aa)) folds into the KH type-2 domain.

Belongs to the universal ribosomal protein uS3 family. As to quaternary structure, part of the 30S ribosomal subunit. Forms a tight complex with proteins S10 and S14.

Its function is as follows. Binds the lower part of the 30S subunit head. Binds mRNA in the 70S ribosome, positioning it for translation. In Halalkalibacterium halodurans (strain ATCC BAA-125 / DSM 18197 / FERM 7344 / JCM 9153 / C-125) (Bacillus halodurans), this protein is Small ribosomal subunit protein uS3.